A 153-amino-acid chain; its full sequence is NADH dehydrogenase [ubiquinone] 1 beta subcomplex subunit 11, mitochondrial (153 aa).

Residues Met1–Trp29 constitute a mitochondrion transit peptide. Positions Pro40–Asp77 are disordered. Positions Leu66–Asp77 are enriched in basic and acidic residues. A helical membrane pass occupies residues Leu89 to Leu109.

The protein belongs to the complex I NDUFB11 subunit family. In terms of assembly, complex I is composed of 45 different subunits. Interacts with BCAP31.

The protein resides in the mitochondrion inner membrane. In terms of biological role, accessory subunit of the mitochondrial membrane respiratory chain NADH dehydrogenase (Complex I), that is believed not to be involved in catalysis. Complex I functions in the transfer of electrons from NADH to the respiratory chain. The immediate electron acceptor for the enzyme is believed to be ubiquinone. This is NADH dehydrogenase [ubiquinone] 1 beta subcomplex subunit 11, mitochondrial (NDUFB11) from Pan troglodytes (Chimpanzee).